The primary structure comprises 111 residues: Large ribosomal subunit protein uL22 (111 aa).

Belongs to the universal ribosomal protein uL22 family. Part of the 50S ribosomal subunit.

Functionally, this protein binds specifically to 23S rRNA; its binding is stimulated by other ribosomal proteins, e.g. L4, L17, and L20. It is important during the early stages of 50S assembly. It makes multiple contacts with different domains of the 23S rRNA in the assembled 50S subunit and ribosome. The globular domain of the protein is located near the polypeptide exit tunnel on the outside of the subunit, while an extended beta-hairpin is found that lines the wall of the exit tunnel in the center of the 70S ribosome. This is Large ribosomal subunit protein uL22 from Fusobacterium nucleatum subsp. nucleatum (strain ATCC 25586 / DSM 15643 / BCRC 10681 / CIP 101130 / JCM 8532 / KCTC 2640 / LMG 13131 / VPI 4355).